The following is a 700-amino-acid chain: Glycine--tRNA ligase beta subunit (700 aa).

It belongs to the class-II aminoacyl-tRNA synthetase family. In terms of assembly, tetramer of two alpha and two beta subunits.

The protein resides in the cytoplasm. It carries out the reaction tRNA(Gly) + glycine + ATP = glycyl-tRNA(Gly) + AMP + diphosphate. This chain is Glycine--tRNA ligase beta subunit, found in Magnetococcus marinus (strain ATCC BAA-1437 / JCM 17883 / MC-1).